We begin with the raw amino-acid sequence, 351 residues long: Mediator of RNA polymerase II transcription subunit 18 (351 aa).

Positions 153-231 (GNGDPIDIDT…LPQSLSNGVS (79 aa)) are disordered. Residues 163–204 (NNDKQGDNNTDKPKQEHDGKLPEAIDEDIIKNGDEKKTTHDD) are compositionally biased toward basic and acidic residues. A compositionally biased stretch (acidic residues) spans 205–216 (NDSDIMEIDEPN). Over residues 217–231 (PETQTLPQSLSNGVS) the composition is skewed to polar residues.

The protein belongs to the Mediator complex subunit 18 family. As to quaternary structure, component of the Mediator complex.

It localises to the nucleus. Component of the Mediator complex, a coactivator involved in the regulated transcription of nearly all RNA polymerase II-dependent genes. Mediator functions as a bridge to convey information from gene-specific regulatory proteins to the basal RNA polymerase II transcription machinery. Mediator is recruited to promoters by direct interactions with regulatory proteins and serves as a scaffold for the assembly of a functional preinitiation complex with RNA polymerase II and the general transcription factors. The polypeptide is Mediator of RNA polymerase II transcription subunit 18 (SRB5) (Candida albicans (strain SC5314 / ATCC MYA-2876) (Yeast)).